We begin with the raw amino-acid sequence, 133 residues long: ATP synthase epsilon chain, chloroplastic (133 aa).

The protein belongs to the ATPase epsilon chain family. F-type ATPases have 2 components, CF(1) - the catalytic core - and CF(0) - the membrane proton channel. CF(1) has five subunits: alpha(3), beta(3), gamma(1), delta(1), epsilon(1). CF(0) has three main subunits: a, b and c.

The protein localises to the plastid. It localises to the chloroplast thylakoid membrane. Functionally, produces ATP from ADP in the presence of a proton gradient across the membrane. This Cyanidium caldarium (Red alga) protein is ATP synthase epsilon chain, chloroplastic.